Reading from the N-terminus, the 79-residue chain is Conotoxin LiCr173 (79 aa).

An N-terminal signal peptide occupies residues M1 to S20. A propeptide spanning residues H21–R46 is cleaved from the precursor. 3 disulfide bridges follow: C52/C64, C56/C73, and C63/C77. The residue at position 78 (F78) is a Phenylalanine amide.

The protein belongs to the conotoxin O3 superfamily. In terms of tissue distribution, expressed by the venom duct.

Its subcellular location is the secreted. The sequence is that of Conotoxin LiCr173 from Conus lividus (Livid cone).